A 160-amino-acid chain; its full sequence is Endoribonuclease YbeY (160 aa).

H124, H128, and H134 together coordinate Zn(2+).

Belongs to the endoribonuclease YbeY family. It depends on Zn(2+) as a cofactor.

The protein resides in the cytoplasm. Single strand-specific metallo-endoribonuclease involved in late-stage 70S ribosome quality control and in maturation of the 3' terminus of the 16S rRNA. The protein is Endoribonuclease YbeY of Jannaschia sp. (strain CCS1).